Consider the following 465-residue polypeptide: Ribulose bisphosphate carboxylase large chain (465 aa).

K4 is modified (N6,N6,N6-trimethyllysine). Substrate-binding residues include N113 and T163. Residue K165 is the Proton acceptor of the active site. K167 provides a ligand contact to substrate. Mg(2+) is bound by residues K191, D193, and E194. N6-carboxylysine is present on K191. Residue H284 is the Proton acceptor of the active site. Substrate contacts are provided by R285, H317, and S369.

This sequence belongs to the RuBisCO large chain family. Type I subfamily. In terms of assembly, heterohexadecamer of 8 large chains and 8 small chains; disulfide-linked. The disulfide link is formed within the large subunit homodimers. The cofactor is Mg(2+). The disulfide bond which can form in the large chain dimeric partners within the hexadecamer appears to be associated with oxidative stress and protein turnover.

It is found in the plastid. The protein localises to the chloroplast. It carries out the reaction 2 (2R)-3-phosphoglycerate + 2 H(+) = D-ribulose 1,5-bisphosphate + CO2 + H2O. The enzyme catalyses D-ribulose 1,5-bisphosphate + O2 = 2-phosphoglycolate + (2R)-3-phosphoglycerate + 2 H(+). Functionally, ruBisCO catalyzes two reactions: the carboxylation of D-ribulose 1,5-bisphosphate, the primary event in carbon dioxide fixation, as well as the oxidative fragmentation of the pentose substrate in the photorespiration process. Both reactions occur simultaneously and in competition at the same active site. This Epacris sp protein is Ribulose bisphosphate carboxylase large chain.